The sequence spans 414 residues: MKSSVFILSLFLLLERQAAVVGQYGGTKGHFQSSSSGFMLGQKGHLNFGLKGGSEEAAEESIFMQSQHQMFGQDGGDMAQTSVSQEHTGVKGAAICRKGQVSQLKSQESQIKSFRQVKSSGQLKSGGSQLKSFGQVKSSESQLKSFGQVKASGSQLKSFGQVKASGSQLKSYGQMKSSGSQVKSFGQMKSSGSQVKSFGQMKASESQIKSFGQRKSQGGQLQSYGQMKSYGQTKSLESQAKSFGQVKSQSGQMKSSYGQRKSYGEETQLKSFDQDAQLKSYGQQKSQKQSSFSQVKSQSAQLKSFGQQKSLKGFSQQTQQKGFAMDEDLSQVRKQFDDDDLSVQQKSTQQMKTEEDLSQFGQQRQFGQERSQSYKGYLAQYRKKLQEQQQQKNFNQDNFFTKGGAGLYQAQLKG.

An N-terminal signal peptide occupies residues 1 to 22; the sequence is MKSSVFILSLFLLLERQAAVVG. Gln23 is subject to Pyrrolidone carboxylic acid. 13 tandem repeats follow at residues 108 to 120, 127 to 139, 140 to 152, 153 to 165, 166 to 178, 179 to 191, 192 to 204, 205 to 217, 224 to 236, 237 to 249, 257 to 269, 275 to 287, and 299 to 311. A 13 X 13 AA tandem repeats region spans residues 108-311; that stretch reads ESQIKSFRQV…LKSFGQQKSL (204 aa). Disordered regions lie at residues 170–228, 240–294, and 306–369; these read KSYG…GQMK, AKSF…SFSQ, and GQQK…FGQE. Residues 240 to 259 show a composition bias toward polar residues; the sequence is AKSFGQVKSQSGQMKSSYGQ. The span at 277 to 294 shows a compositional bias: low complexity; it reads QLKSYGQQKSQKQSSFSQ. Composition is skewed to polar residues over residues 306 to 321 and 342 to 351; these read GQQKSLKGFSQQTQQK and SVQQKSTQQM. Residues 358 to 369 show a composition bias toward low complexity; that stretch reads SQFGQQRQFGQE.

In terms of processing, the repeating unit appears to be involved in the formation of the copulatory plug via a transglutaminase reaction cross-linking glutamine and lysine residues.

Its function is as follows. The rat seminal vesicle contains six major androgen-dependent secretory proteins referred to as SVS I-VI. The SVS I-III proteins appear to be components of the rat copulatory plug, with the SVS II protein being the major component. The chain is Seminal vesicle secretory protein 2 (Svs2) from Rattus norvegicus (Rat).